The chain runs to 315 residues: MTNEKVNKVALIGAGFVGSSYAFTLINQVITDELVVIDLNQDKAMGDVMDLNHGKAFAPHPVNTWYGDYEDCKDADIVCICAGANQKPGETRLDLVEKNLNIFKGIVDNVMKSGFDGIFLVATNPVDILTYATWKFSGLPKERVIGSGTTLDTARFRYMLSEYFDAAAHNVHAYIIGEHGDTELAVWSHANIGSVPITELMKKNDQYKQEDLDEMMENVRHAAYQIIEKKGATYYGVAMSLARITRAILHNENSILTVSTYLDGEYGADDVYIGVPALVNRNGATEVIELALNDTEKEQFAHSVNVLKEILAPHF.

NAD(+) is bound by residues V17, D38, K43, Y69, and 83–84; that span reads GA. Residues Q86, R92, and 124–127 each bind substrate; that span reads NPVD. NAD(+) contacts are provided by residues 122–124 and S147; that span reads ATN. 152-155 is a substrate binding site; sequence DTAR. R157 and H172 together coordinate beta-D-fructose 1,6-bisphosphate. The active-site Proton acceptor is H179. At Y224 the chain carries Phosphotyrosine. T233 is a substrate binding site.

The protein belongs to the LDH/MDH superfamily. LDH family. As to quaternary structure, homotetramer.

It is found in the cytoplasm. The enzyme catalyses (S)-lactate + NAD(+) = pyruvate + NADH + H(+). It participates in fermentation; pyruvate fermentation to lactate; (S)-lactate from pyruvate: step 1/1. With respect to regulation, allosterically activated by fructose 1,6-bisphosphate (FBP). Functionally, catalyzes the conversion of lactate to pyruvate. The protein is L-lactate dehydrogenase of Bacillus pumilus (strain SAFR-032).